We begin with the raw amino-acid sequence, 1184 residues long: Cartilage intermediate layer protein 1 (1184 aa).

A signal peptide spans 1 to 21 (MVGTKAWVFSFLVLEVTSVLG). Residues Asn-129 and Asn-132 are each glycosylated (N-linked (GlcNAc...) asparagine). The TSP type-1 domain maps to 149–201 (ERIWSPWSPWSKCSAACGQTGVQTRTRICLAEMVSLCSEASEEGQHCMGQDCT). 4 disulfides stabilise this stretch: Cys-161–Cys-195, Cys-165–Cys-200, Cys-177–Cys-185, and Cys-330–Cys-376. An Ig-like C2-type domain is found at 309 to 395 (PYMVMNPETK…KSKVAQLIVI (87 aa)). Asn-346, Asn-420, Asn-550, Asn-631, Asn-1000, and Asn-1056 each carry an N-linked (GlcNAc...) asparagine glycan. Positions 1136–1170 (TPAQSPAAGTVQGRVPSRRQQRASRGGQRQGGVVA) are disordered. Residues 1158-1170 (ASRGGQRQGGVVA) show a composition bias toward low complexity.

Monomer. Interacts with TGFB1. Cleaved into 2 chains possibly by a furin-like protease upon or preceding secretion. As to expression, specifically expressed in cartilage. Localizes in the intermediates layer of articular cartilage but neither in the superficial nor in the deepest regions. Specifically and highly expressed in intervertebral disk tissue. Expression increases with aging in hip articular cartilage. Overexpressed in articular hyaline cartilage from patients with calcium pyrophosphate dihydrate crystal deposition disease (CPPD). Expression in intervertebral disk tissue from individuals with lumbar disk disease increases as disk degeneration progresses.

The protein resides in the secreted. The protein localises to the extracellular space. It is found in the extracellular matrix. Its function is as follows. Probably plays a role in cartilage scaffolding. May act by antagonizing TGF-beta1 (TGFB1) and IGF1 functions. Has the ability to suppress IGF1-induced proliferation and sulfated proteoglycan synthesis, and inhibits ligand-induced IGF1R autophosphorylation. May inhibit TGFB1-mediated induction of cartilage matrix genes via its interaction with TGFB1. Overexpression may lead to impair chondrocyte growth and matrix repair and indirectly promote inorganic pyrophosphate (PPi) supersaturation in aging and osteoarthritis cartilage. This chain is Cartilage intermediate layer protein 1 (CILP), found in Homo sapiens (Human).